A 30-amino-acid polypeptide reads, in one-letter code: Pyrrole-2-carboxylate oxygenase (30 aa).

In terms of assembly, homotrimer. It depends on FAD as a cofactor.

The enzyme catalyses pyrrole-2-carboxylate + NADH + O2 + H(+) = 5-hydroxypyrrole-2-carboxylate + NAD(+) + H2O. Its function is as follows. Monooxygenase that initiates the degradation of pyrrole-2-carboxylate, which allows Arthrobacter sp. strain Py1 to grow on pyrrole-2-carboxylate as sole carbon, nitrogen, and energy source. To a lesser extent, can also use pyrrole, pyrrole-2-aldehyde, and indole-2-carboxylate as substrate. The polypeptide is Pyrrole-2-carboxylate oxygenase (Arthrobacter sp. (strain Py1)).